Consider the following 411-residue polypeptide: Serpin A3-3 (411 aa).

The first 24 residues, 1–24, serve as a signal peptide directing secretion; that stretch reads MRAERLSPLLALGLLVAGIRSVHC. Residues asparagine 100, asparagine 180, asparagine 230, asparagine 264, and asparagine 318 are each glycosylated (N-linked (GlcNAc...) asparagine).

Belongs to the serpin family. As to quaternary structure, homodimer.

It localises to the cytoplasmic vesicle. The protein localises to the secretory vesicle. Its subcellular location is the chromaffin granule. It is found in the secreted. In terms of biological role, serine protease inhibitor. Strongly inhibits elastase and trypsin stoichiometrically at the molar ratio of 1:1. Acts as a moderate inhibitor of plasmin and chymotrypsin. Does not inhibit thrombin, urokinase, kallikrein, tissue plasminogen activator, cathepsin G or the cysteine proteases papain, cathepsin B or cathepsin L. The polypeptide is Serpin A3-3 (SERPINA3-3) (Bos taurus (Bovine)).